Here is a 270-residue protein sequence, read N- to C-terminus: Acyl-[acyl-carrier-protein]--UDP-N-acetylglucosamine O-acyltransferase (270 aa).

The protein belongs to the transferase hexapeptide repeat family. LpxA subfamily. As to quaternary structure, homotrimer.

The protein resides in the cytoplasm. The enzyme catalyses a (3R)-hydroxyacyl-[ACP] + UDP-N-acetyl-alpha-D-glucosamine = a UDP-3-O-[(3R)-3-hydroxyacyl]-N-acetyl-alpha-D-glucosamine + holo-[ACP]. Its pathway is glycolipid biosynthesis; lipid IV(A) biosynthesis; lipid IV(A) from (3R)-3-hydroxytetradecanoyl-[acyl-carrier-protein] and UDP-N-acetyl-alpha-D-glucosamine: step 1/6. Its function is as follows. Involved in the biosynthesis of lipid A, a phosphorylated glycolipid that anchors the lipopolysaccharide to the outer membrane of the cell. The protein is Acyl-[acyl-carrier-protein]--UDP-N-acetylglucosamine O-acyltransferase of Helicobacter pylori (strain J99 / ATCC 700824) (Campylobacter pylori J99).